The sequence spans 105 residues: Small cysteine and glycine repeat-containing protein 10 (105 aa).

Residues 4–41 form a 10 X 2 AA repeats of CG region; the sequence is CGCGGCGGRCSGGCGGGCGGGCGGGCGGGCGGCGGGCG.

Belongs to the KRTAP type 28 family.

Its function is as follows. In the hair cortex, hair keratin intermediate filaments are embedded in an interfilamentous matrix, consisting of hair keratin-associated proteins (KRTAP), which are essential for the formation of a rigid and resistant hair shaft through their extensive disulfide bond cross-linking with abundant cysteine residues of hair keratins. The matrix proteins include the high-sulfur and high-glycine-tyrosine keratins. This Homo sapiens (Human) protein is Small cysteine and glycine repeat-containing protein 10.